Consider the following 221-residue polypeptide: CASP-like protein 4B1 (221 aa).

The disordered stretch occupies residues 1–78 (MAMQLHAASP…HDHHGGGGGG (78 aa)). The Cytoplasmic portion of the chain corresponds to 1 to 87 (MAMQLHAASP…GDEATQLLNG (87 aa)). The span at 19–33 (SPPPPPPLSPHPEPA) shows a compositional bias: pro residues. Residues 50 to 62 (APVATATTPLTPG) are compositionally biased toward low complexity. A helical transmembrane segment spans residues 88 to 108 (IVLVLRAGAALLSFVAMALVA). Topologically, residues 109-125 (SCRHGDWMDFLRYQEYR) are extracellular. A helical membrane pass occupies residues 126–146 (YLLGVSVVAFVYSAAQALKNF). At 147–160 (RRRRRGAADASFLD) the chain is on the cytoplasmic side. The helical transmembrane segment at 161–181 (FAGDQAVAYLLVTASAAALPI) threads the bilayer. The Extracellular portion of the chain corresponds to 182 to 196 (TIRMRSAVVNVFTDA). Residues 197 to 217 (IAASIALGFLAFAALALSAML) traverse the membrane as a helical segment. Topologically, residues 218–221 (SRHA) are cytoplasmic.

This sequence belongs to the Casparian strip membrane proteins (CASP) family. As to quaternary structure, homodimer and heterodimers.

It is found in the cell membrane. This Hordeum vulgare subsp. vulgare (Domesticated barley) protein is CASP-like protein 4B1.